Reading from the N-terminus, the 275-residue chain is 2-dehydro-3-deoxyphosphooctonate aldolase (275 aa).

This sequence belongs to the KdsA family.

Its subcellular location is the cytoplasm. It carries out the reaction D-arabinose 5-phosphate + phosphoenolpyruvate + H2O = 3-deoxy-alpha-D-manno-2-octulosonate-8-phosphate + phosphate. The protein operates within carbohydrate biosynthesis; 3-deoxy-D-manno-octulosonate biosynthesis; 3-deoxy-D-manno-octulosonate from D-ribulose 5-phosphate: step 2/3. It participates in bacterial outer membrane biogenesis; lipopolysaccharide biosynthesis. In Protochlamydia amoebophila (strain UWE25), this protein is 2-dehydro-3-deoxyphosphooctonate aldolase.